The sequence spans 412 residues: Serine hydroxymethyltransferase (412 aa).

(6S)-5,6,7,8-tetrahydrofolate is bound by residues Leu121 and 125–127; that span reads GHL. Lys230 is modified (N6-(pyridoxal phosphate)lysine). 353–355 is a binding site for (6S)-5,6,7,8-tetrahydrofolate; sequence TPF.

Belongs to the SHMT family. As to quaternary structure, homodimer. Pyridoxal 5'-phosphate serves as cofactor.

The protein localises to the cytoplasm. The enzyme catalyses (6R)-5,10-methylene-5,6,7,8-tetrahydrofolate + glycine + H2O = (6S)-5,6,7,8-tetrahydrofolate + L-serine. It functions in the pathway one-carbon metabolism; tetrahydrofolate interconversion. The protein operates within amino-acid biosynthesis; glycine biosynthesis; glycine from L-serine: step 1/1. Functionally, catalyzes the reversible interconversion of serine and glycine with tetrahydrofolate (THF) serving as the one-carbon carrier. This reaction serves as the major source of one-carbon groups required for the biosynthesis of purines, thymidylate, methionine, and other important biomolecules. Also exhibits THF-independent aldolase activity toward beta-hydroxyamino acids, producing glycine and aldehydes, via a retro-aldol mechanism. In Finegoldia magna (strain ATCC 29328 / DSM 20472 / WAL 2508) (Peptostreptococcus magnus), this protein is Serine hydroxymethyltransferase.